A 3305-amino-acid chain; its full sequence is Apolipophorins (3305 aa).

The N-terminal stretch at 1–23 (MGKSNRLLSVLFVISVLWKAAYG) is a signal peptide. Residues 39 to 640 (FAAGQKYNYG…SQTSFLPRSV (602 aa)) form the Vitellogenin domain. Asn-643 and Asn-2769 each carry an N-linked (GlcNAc...) asparagine glycan. One can recognise a VWFD domain in the interval 2733-2899 (LRAVVVNGQH…NSYRLSRSCP (167 aa)). Cysteines 2757 and 2898 form a disulfide.

Post-translationally, cleaved into 2 chains by furin protease. However, prevention of cleavage does not impair its function. In terms of processing, N-glycosylated.

It localises to the secreted. In terms of biological role, constitutes the major component of lipophorin, which mediates transport for various types of lipids in hemolymph. Acts by forming lipoprotein particles that bind lipoproteins and lipids. May be required for morphogens wingless (wg) and hedgehog (hh) function, possibly by acting as vehicles for the movement of wg and hh. The sequence is that of Apolipophorins from Manduca sexta (Tobacco hawkmoth).